Consider the following 284-residue polypeptide: AA14 family lytic polysaccharide monooxygenase B (284 aa).

The first 20 residues, 1-20 (MGYLSKLVTSVVFAIPLASA), serve as a signal peptide directing secretion. N-linked (GlcNAc...) asparagine glycosylation is found at N42, N96, N142, and N183. A disulfide bond links C197 and C218.

This sequence belongs to the polysaccharide monooxygenase AA14 family. Requires Cu(2+) as cofactor.

The protein localises to the secreted. Its function is as follows. Lytic polysaccharide monooxygenase (LPMO) that plays decomposes some specific network structures formed between cellulose and hemicellulose in the plant cell walls. Catalysis by LPMOs requires the reduction of the active-site copper from Cu(II) to Cu(I) by a reducing agent and H(2)O(2) or O(2) as a cosubstrate. The sequence is that of AA14 family lytic polysaccharide monooxygenase B from Talaromyces rugulosus (Penicillium rugulosum).